The sequence spans 206 residues: Large ribosomal subunit protein uL4 (206 aa).

The protein belongs to the universal ribosomal protein uL4 family. In terms of assembly, part of the 50S ribosomal subunit.

In terms of biological role, one of the primary rRNA binding proteins, this protein initially binds near the 5'-end of the 23S rRNA. It is important during the early stages of 50S assembly. It makes multiple contacts with different domains of the 23S rRNA in the assembled 50S subunit and ribosome. Its function is as follows. Forms part of the polypeptide exit tunnel. In Bradyrhizobium sp. (strain BTAi1 / ATCC BAA-1182), this protein is Large ribosomal subunit protein uL4.